A 186-amino-acid chain; its full sequence is Ribosome-recycling factor (186 aa).

It belongs to the RRF family.

The protein resides in the cytoplasm. Its function is as follows. Responsible for the release of ribosomes from messenger RNA at the termination of protein biosynthesis. May increase the efficiency of translation by recycling ribosomes from one round of translation to another. The protein is Ribosome-recycling factor of Bartonella henselae (strain ATCC 49882 / DSM 28221 / CCUG 30454 / Houston 1) (Rochalimaea henselae).